A 908-amino-acid chain; its full sequence is Glutamate receptor ionotropic, kainate 2 (908 aa).

An N-terminal signal peptide occupies residues Met-1–Gly-31. Residues Thr-32–Pro-561 are Extracellular-facing. Residues Asn-67, Asn-73, Asn-275, Asn-378, Asn-412, Asn-423, and Asn-430 are each glycosylated (N-linked (GlcNAc...) asparagine). The cysteines at positions 96 and 347 are disulfide-linked. Positions 516, 518, and 523 each coordinate L-glutamate. Asn-546 is a glycosylation site (N-linked (GlcNAc...) asparagine). The chain crosses the membrane as a helical span at residues Asp-562 to Ala-582. Residues Arg-583–Ile-635 are Cytoplasmic-facing. The chain crosses the membrane as a helical span at residues Val-636–Ala-656. Over Ala-657 to Asn-819 the chain is Extracellular. The L-glutamate site is built by Ala-689, Thr-690, and Glu-738. Cysteines 750 and 804 form a disulfide. Asn-751 carries N-linked (GlcNAc...) asparagine glycosylation. The chain crosses the membrane as a helical span at residues Ile-820–Gly-840. The Cytoplasmic segment spans residues Glu-841–Ala-908. Phosphoserine; by PKC occurs at positions 846 and 868. Lys-886 is covalently cross-linked (Glycyl lysine isopeptide (Lys-Gly) (interchain with G-Cter in SUMO1)).

The protein belongs to the glutamate-gated ion channel (TC 1.A.10.1) family. GRIK2 subfamily. In terms of assembly, homotetramer and heterotetramer with GRIK5. Tetramers may be formed by the dimerization of dimers. Assembles into a kainate-gated homomeric channel that does not bind AMPA. Can form functional heteromeric receptors with GRIK5. Can form functional heteromeric receptors with GRIK3 and GRIK4. Interacts with DLG4. Interacts with NETO2. Interacts (via C-terminus) with KLHL17 (via kelch repeats); the interaction targets GRIK2 for degradation via ubiquitin-proteasome pathway. In terms of processing, sumoylation mediates kainate receptor-mediated endocytosis and regulates synaptic transmission. Sumoylation is enhanced by PIAS3 and desumoylated by SENP1. Ubiquitinated. Ubiquitination regulates the GRIK2 levels at the synapse by leading kainate receptor degradation through proteasome. Post-translationally, phosphorylated by PKC at Ser-868 upon agonist activation, this directly enhance sumoylation. As to expression, expression is higher in cerebellum than in cerebral cortex.

It localises to the cell membrane. The protein resides in the postsynaptic cell membrane. The catalysed reaction is Ca(2+)(in) = Ca(2+)(out). The enzyme catalyses Na(+)(in) = Na(+)(out). Cold receptor activity activated by temperatures between 10-19 degrees Celsius. Ionotropic glutamate receptor that functions as a cation permeable ligand-gated ion channel, gated by L-glutamate and the glutamatergic agonist kainic acid. L-glutamate acts as an excitatory neurotransmitter at many synapses in the central nervous system. Binding of the excitatory neurotransmitter L-glutamate induces a conformation change, leading to the opening of the cation channel, and thereby converts the chemical signal to an electrical impulse. The receptor then desensitizes rapidly and enters a transient inactive state, characterized by the presence of bound agonist. Modulates cell surface expression of NETO2. In association with GRIK3, involved in presynaptic facilitation of glutamate release at hippocampal mossy fiber synapses. In terms of biological role, independent of its ionotropic glutamate receptor activity, acts as a thermoreceptor conferring sensitivity to cold temperatures. Functions in dorsal root ganglion neurons. This is Glutamate receptor ionotropic, kainate 2 (GRIK2) from Homo sapiens (Human).